Here is a 241-residue protein sequence, read N- to C-terminus: GDSL esterase/lipase At5g45920 (241 aa).

The Nucleophile role is filled by Ser-12. Catalysis depends on residues Asp-189 and His-192.

This sequence belongs to the 'GDSL' lipolytic enzyme family.

The protein is GDSL esterase/lipase At5g45920 of Arabidopsis thaliana (Mouse-ear cress).